The primary structure comprises 88 residues: Small ribosomal subunit protein uS17 (88 aa).

It belongs to the universal ribosomal protein uS17 family. As to quaternary structure, part of the 30S ribosomal subunit.

Its function is as follows. One of the primary rRNA binding proteins, it binds specifically to the 5'-end of 16S ribosomal RNA. This chain is Small ribosomal subunit protein uS17, found in Levilactobacillus brevis (strain ATCC 367 / BCRC 12310 / CIP 105137 / JCM 1170 / LMG 11437 / NCIMB 947 / NCTC 947) (Lactobacillus brevis).